Reading from the N-terminus, the 199-residue chain is Shikimate kinase (199 aa).

An ATP-binding site is contributed by 32-37 (GSGKTS). Position 36 (threonine 36) interacts with Mg(2+). 3 residues coordinate substrate: aspartate 54, arginine 78, and glycine 100. Arginine 138 is a binding site for ATP. Arginine 157 contributes to the substrate binding site.

This sequence belongs to the shikimate kinase family. In terms of assembly, monomer. Mg(2+) is required as a cofactor.

It is found in the cytoplasm. The enzyme catalyses shikimate + ATP = 3-phosphoshikimate + ADP + H(+). It functions in the pathway metabolic intermediate biosynthesis; chorismate biosynthesis; chorismate from D-erythrose 4-phosphate and phosphoenolpyruvate: step 5/7. Functionally, catalyzes the specific phosphorylation of the 3-hydroxyl group of shikimic acid using ATP as a cosubstrate. The sequence is that of Shikimate kinase from Synechococcus sp. (strain CC9605).